Consider the following 237-residue polypeptide: Nodulation protein NolA (237 aa).

The HTH merR-type domain maps to 10–79 (RWRIGELAEA…LVEIRKAMEG (70 aa)). The segment at residues 13–32 (IGELAEATGVTVRTLHHYEH) is a DNA-binding region (H-T-H motif).

In terms of biological role, involved in genotype-specific nodulation of soybeans. The chain is Nodulation protein NolA (nolA) from Bradyrhizobium diazoefficiens (strain JCM 10833 / BCRC 13528 / IAM 13628 / NBRC 14792 / USDA 110).